Consider the following 286-residue polypeptide: MKTFVLFVILLCLTFLSISKSETCPFSQSLVSGASATYYTDPNAGNCGYENLMGPLGPGNLFIAALGPNLYNNGKNCGQCFNISSPYTNRSVVIMATDSCPDSGYCQRSSHFDLSTQAFDVLGAQSIGVLEGLTYYKVPCGVNGNVKIMMKDGSNDYWTAFLIYNSKVTIKDVSVKITGKSTYTSLTQSSYNYWISPNMVPGSFDVRIESVGGEFIYITIPKVESRKQYETSSQFSVDGCVGTPSGPSGGLGSPSTGASIGTPSDASSLTLYALFSLTILFLVMLN.

The first 21 residues, 1-21 (MKTFVLFVILLCLTFLSISKS), serve as a signal peptide directing secretion. Residues 22-265 (ETCPFSQSLV…TGASIGTPSD (244 aa)) are Extracellular-facing. Residues 44–145 (AGNCGYENLM…YKVPCGVNGN (102 aa)) enclose the Expansin-like EG45 domain. Cystine bridges form between cysteine 47–cysteine 77 and cysteine 80–cysteine 140. Asparagine 82 and asparagine 89 each carry an N-linked (GlcNAc...) asparagine glycan. The chain crosses the membrane as a helical span at residues 266 to 286 (ASSLTLYALFSLTILFLVMLN).

Belongs to the expansin family. Expansin A subfamily.

The protein resides in the membrane. Its function is as follows. May serve to lubricate the movement of the cellulose microfibrils during cell growth and wall extension and/or they may serve to maintain the fluid state of the slug cell wall. The chain is Expansin-like protein 1 (expl1) from Dictyostelium discoideum (Social amoeba).